We begin with the raw amino-acid sequence, 276 residues long: Hemin import ATP-binding protein HmuV (276 aa).

Positions 2–259 (LTAHHLDVAR…AHIAQCYGFA (258 aa)) constitute an ABC transporter domain. 34–41 (GRNGAGKS) serves as a coordination point for ATP.

Belongs to the ABC transporter superfamily. Heme (hemin) importer (TC 3.A.1.14.5) family. The complex is composed of two ATP-binding proteins (HmuV), two transmembrane proteins (HmuU) and a solute-binding protein (HmuT).

Its subcellular location is the cell inner membrane. Part of the ABC transporter complex HmuTUV involved in hemin import. Responsible for energy coupling to the transport system. The protein is Hemin import ATP-binding protein HmuV of Burkholderia cenocepacia (strain HI2424).